An 88-amino-acid polypeptide reads, in one-letter code: MANIKSSKKRSIQSEKKRKYNSSKKSMIRSFIKKVKNSILKKEKDTINNSFIEMQSILDRYAKKNLIHKNKASRLKSRLSKKIKFIFK.

The span at 1-22 shows a compositional bias: basic residues; it reads MANIKSSKKRSIQSEKKRKYNS. The interval 1–26 is disordered; it reads MANIKSSKKRSIQSEKKRKYNSSKKS.

It belongs to the bacterial ribosomal protein bS20 family.

Functionally, binds directly to 16S ribosomal RNA. This is Small ribosomal subunit protein bS20 from Wigglesworthia glossinidia brevipalpis.